The sequence spans 407 residues: Biflaviolin synthase CYP158A1 (407 aa).

The span at 1–11 (MTQETTTLTGQ) shows a compositional bias: polar residues. Positions 1 to 20 (MTQETTTLTGQSPPPVRDWP) are disordered. Flaviolin-binding positions include Arg92, Tyr199, and 290-291 (HR). Heme is bound at residue Cys356.

It belongs to the cytochrome P450 family. Heme serves as cofactor.

It carries out the reaction 2 flaviolin + 2 reduced [2Fe-2S]-[ferredoxin] + O2 + H(+) = 3,3'-biflaviolin + 2 oxidized [2Fe-2S]-[ferredoxin] + 2 H2O. The enzyme catalyses 2 flaviolin + 2 reduced [2Fe-2S]-[ferredoxin] + O2 + H(+) = 3,8'-biflaviolin + 2 oxidized [2Fe-2S]-[ferredoxin] + 2 H2O. The protein operates within pigment biosynthesis. In terms of biological role, catalyzes oxidative C-C coupling reaction to polymerize flaviolin and form highly conjugated pigments which protect the soil bacterium from deleterious effects of UV irradiation (two isomers of biflaviolin and one triflaviolin). This chain is Biflaviolin synthase CYP158A1, found in Streptomyces coelicolor (strain ATCC BAA-471 / A3(2) / M145).